Here is a 258-residue protein sequence, read N- to C-terminus: Acyl-[acyl-carrier-protein]--UDP-N-acetylglucosamine O-acyltransferase (258 aa).

The protein belongs to the transferase hexapeptide repeat family. LpxA subfamily. Homotrimer.

Its subcellular location is the cytoplasm. The enzyme catalyses a (3R)-hydroxyacyl-[ACP] + UDP-N-acetyl-alpha-D-glucosamine = a UDP-3-O-[(3R)-3-hydroxyacyl]-N-acetyl-alpha-D-glucosamine + holo-[ACP]. It participates in glycolipid biosynthesis; lipid IV(A) biosynthesis; lipid IV(A) from (3R)-3-hydroxytetradecanoyl-[acyl-carrier-protein] and UDP-N-acetyl-alpha-D-glucosamine: step 1/6. Its function is as follows. Involved in the biosynthesis of lipid A, a phosphorylated glycolipid that anchors the lipopolysaccharide to the outer membrane of the cell. This is Acyl-[acyl-carrier-protein]--UDP-N-acetylglucosamine O-acyltransferase from Pseudomonas entomophila (strain L48).